The sequence spans 192 residues: Ribosomal RNA large subunit methyltransferase E (192 aa).

The S-adenosyl-L-methionine site is built by G46, W48, D63, D79, and D102. K142 (proton acceptor) is an active-site residue.

The protein belongs to the class I-like SAM-binding methyltransferase superfamily. RNA methyltransferase RlmE family.

It is found in the cytoplasm. The catalysed reaction is uridine(2552) in 23S rRNA + S-adenosyl-L-methionine = 2'-O-methyluridine(2552) in 23S rRNA + S-adenosyl-L-homocysteine + H(+). Specifically methylates the uridine in position 2552 of 23S rRNA at the 2'-O position of the ribose in the fully assembled 50S ribosomal subunit. The chain is Ribosomal RNA large subunit methyltransferase E from Wolbachia pipientis wMel.